Reading from the N-terminus, the 185-residue chain is MMKATIVLDAKGLACPMPIVKTKKRMKDLKAGEVLEIHATDKGSTADLEAWAKSTGHEYLGTEAEGEILRHFLRKGGEHSSENASSIPEISLEAFKQKVDSDESLNILDVREIEEYEKAHIPGVVHIPLGEVEKRANELNENDEIYIICHSGRRSEMAARTMKKQGFKKVINVVPGMRDWTGKTE.

Cys15 acts as the Cysteine persulfide intermediate in catalysis. The region spanning Ser101–Glu185 is the Rhodanese domain.

Belongs to the sulfur carrier protein TusA family.

The chain is Putative sulfur carrier protein YrkF (yrkF) from Bacillus subtilis (strain 168).